Reading from the N-terminus, the 236-residue chain is MLNPNIFHMPKIIIALDFCNKKSAMKLVNLLNPSIFYLKIGKEMFTILGCKFVKELHQLGFNIFLDLKFHDIPNTVFNATKAAADLGIWMLSVHASGGKEMLISAKKALKSFKKAPLLIAVTALTSFKEEALKEIGINISLTEYILKLSKLSNDCGLDGIVCPGKEAKKIKFLFGNKYKIITPGIRIAKDLLYDQNNIITPKEAKEYKIDYIVIGRSITMSKNPIKKLDLIIKSMQ.

Substrate is bound by residues Asp17, Lys39, 66–75 (DLKFHDIPNT), Thr125, Arg186, Gln195, Gly215, and Arg216. The Proton donor role is filled by Lys68.

This sequence belongs to the OMP decarboxylase family. Type 1 subfamily. In terms of assembly, homodimer.

The catalysed reaction is orotidine 5'-phosphate + H(+) = UMP + CO2. The protein operates within pyrimidine metabolism; UMP biosynthesis via de novo pathway; UMP from orotate: step 2/2. Its function is as follows. Catalyzes the decarboxylation of orotidine 5'-monophosphate (OMP) to uridine 5'-monophosphate (UMP). The chain is Orotidine 5'-phosphate decarboxylase from Buchnera aphidicola subsp. Acyrthosiphon pisum (strain APS) (Acyrthosiphon pisum symbiotic bacterium).